The sequence spans 479 residues: Aspartyl/glutamyl-tRNA(Asn/Gln) amidotransferase subunit B (479 aa).

This sequence belongs to the GatB/GatE family. GatB subfamily. Heterotrimer of A, B and C subunits.

It carries out the reaction L-glutamyl-tRNA(Gln) + L-glutamine + ATP + H2O = L-glutaminyl-tRNA(Gln) + L-glutamate + ADP + phosphate + H(+). The catalysed reaction is L-aspartyl-tRNA(Asn) + L-glutamine + ATP + H2O = L-asparaginyl-tRNA(Asn) + L-glutamate + ADP + phosphate + 2 H(+). Its function is as follows. Allows the formation of correctly charged Asn-tRNA(Asn) or Gln-tRNA(Gln) through the transamidation of misacylated Asp-tRNA(Asn) or Glu-tRNA(Gln) in organisms which lack either or both of asparaginyl-tRNA or glutaminyl-tRNA synthetases. The reaction takes place in the presence of glutamine and ATP through an activated phospho-Asp-tRNA(Asn) or phospho-Glu-tRNA(Gln). This is Aspartyl/glutamyl-tRNA(Asn/Gln) amidotransferase subunit B from Streptococcus pyogenes serotype M4 (strain MGAS10750).